The primary structure comprises 469 residues: Properdin (469 aa).

The N-terminal stretch at 1 to 27 (MITEGAQAPRLLLPPLLLLLTLPATGS) is a signal peptide. TSP type-1 domains follow at residues 28–76 (DPVL…QPCR), 77–134 (SPRW…QCCP), 136–191 (MGGW…QVCP), 193–255 (HGAW…PPCP), 257–313 (AGGW…VPCP), 315–377 (DGEW…QHCP), and 379–462 (KGSW…PACK). 3 disulfide bridges follow: cysteine 32/cysteine 56, cysteine 43/cysteine 72, and cysteine 57/cysteine 75. Tryptophan 83 and tryptophan 86 each carry a C-linked (Man) tryptophan glycan. 7 cysteine pairs are disulfide-bonded: cysteine 89–cysteine 127, cysteine 93–cysteine 133, cysteine 104–cysteine 111, cysteine 132–cysteine 170, cysteine 148–cysteine 184, cysteine 152–cysteine 190, and cysteine 163–cysteine 174. Threonine 92 carries O-linked (Fuc...) threonine glycosylation. Residues tryptophan 139, tryptophan 142, and tryptophan 145 are each glycosylated (C-linked (Man) tryptophan). A glycan (O-linked (Fuc...) threonine) is linked at threonine 151. 3 C-linked (Man) tryptophan glycosylation sites follow: tryptophan 196, tryptophan 199, and tryptophan 202. Disulfide bonds link cysteine 205/cysteine 248, cysteine 209/cysteine 254, and cysteine 224/cysteine 238. Serine 208 carries O-linked (Fuc...) serine glycosylation. A disordered region spans residues 219 to 238 (TRSRKCSAPEPSQKPPGKPC). Tryptophan 260 and tryptophan 263 each carry a C-linked (Man) tryptophan glycan. Disulfide bonds link cysteine 269–cysteine 306, cysteine 273–cysteine 312, and cysteine 284–cysteine 296. Threonine 272 carries an O-linked (Fuc...) threonine glycan. Residues tryptophan 321 and tryptophan 324 are each glycosylated (C-linked (Man) tryptophan). Cystine bridges form between cysteine 327–cysteine 370, cysteine 337–cysteine 376, and cysteine 350–cysteine 360. The tract at residues 351–359 (RGRKFDGHR) is interaction with Complement C3 beta chain. Residues tryptophan 382, tryptophan 385, and tryptophan 388 are each glycosylated (C-linked (Man) tryptophan). 3 cysteine pairs are disulfide-bonded: cysteine 391–cysteine 455, cysteine 395–cysteine 461, and cysteine 407–cysteine 439. N-linked (GlcNAc...) (complex) asparagine glycosylation occurs at asparagine 428.

In terms of assembly, in plasma, properdin exists as dimers, trimers or tetramers in the relative proportions of 26:54:20. Interacts with the pro-C3-convertase enzyme complex (C3b-Bb) comprised of Complement C3 beta chain (C3b) and the Complement factor B Bb fragment (Bb), where it binds (via its TSP type-1 5 domain) with C3b and Bb. This interaction stabilizes the complex and allows it to become the active C3-convertase enzyme complex (C3b-Bb-FP). Interacts with C3b. Interacts with CFB.

It localises to the secreted. Functionally, a positive regulator of the alternate pathway (AP) of complement. It binds to and stabilizes the C3- and C5-convertase enzyme complexes. Inhibits CFI-CFH mediated degradation of Complement C3 beta chain (C3b). This chain is Properdin, found in Homo sapiens (Human).